A 161-amino-acid polypeptide reads, in one-letter code: Nucleoside diphosphate kinase (161 aa).

Lys-12, Phe-60, Arg-88, Thr-94, and Arg-105 together coordinate ATP. Catalysis depends on His-121, which acts as the Pros-phosphohistidine intermediate.

This sequence belongs to the NDK family. It depends on Mg(2+) as a cofactor.

It is found in the cytoplasm. The enzyme catalyses a 2'-deoxyribonucleoside 5'-diphosphate + ATP = a 2'-deoxyribonucleoside 5'-triphosphate + ADP. It catalyses the reaction a ribonucleoside 5'-diphosphate + ATP = a ribonucleoside 5'-triphosphate + ADP. Major role in the synthesis of nucleoside triphosphates other than ATP. The ATP gamma phosphate is transferred to the NDP beta phosphate via a ping-pong mechanism, using a phosphorylated active-site intermediate. This chain is Nucleoside diphosphate kinase, found in Pyrococcus furiosus (strain ATCC 43587 / DSM 3638 / JCM 8422 / Vc1).